The primary structure comprises 508 residues: Photosystem II CP47 reaction center protein (508 aa).

A run of 6 helical transmembrane segments spans residues 21 to 36 (AVHIMHTALVSGWAGS), 101 to 115 (IVFSGLCFLAAIWHW), 140 to 156 (GIHLFLAGVACFGFGAF), 203 to 218 (IAAGTLGILAGLFHLS), 237 to 252 (VLSSSIAAVFFAAFVV), and 457 to 472 (TFALLFFFGHIWHGAR).

Belongs to the PsbB/PsbC family. PsbB subfamily. PSII is composed of 1 copy each of membrane proteins PsbA, PsbB, PsbC, PsbD, PsbE, PsbF, PsbH, PsbI, PsbJ, PsbK, PsbL, PsbM, PsbT, PsbX, PsbY, PsbZ, Psb30/Ycf12, at least 3 peripheral proteins of the oxygen-evolving complex and a large number of cofactors. It forms dimeric complexes. Binds multiple chlorophylls. PSII binds additional chlorophylls, carotenoids and specific lipids. serves as cofactor.

The protein resides in the plastid. It localises to the chloroplast thylakoid membrane. One of the components of the core complex of photosystem II (PSII). It binds chlorophyll and helps catalyze the primary light-induced photochemical processes of PSII. PSII is a light-driven water:plastoquinone oxidoreductase, using light energy to abstract electrons from H(2)O, generating O(2) and a proton gradient subsequently used for ATP formation. The sequence is that of Photosystem II CP47 reaction center protein from Brachypodium distachyon (Purple false brome).